The sequence spans 284 residues: Origin of replication complex subunit 6 (284 aa).

Belongs to the ORC6 family. In terms of assembly, component of the origin recognition complex (ORC) composed of at least ORC1 (ORC1A or ORC1B), ORC2, ORC3, ORC4, ORC5 and ORC6. ORC is regulated in a cell-cycle and development dependent manner. It is sequentially assembled at the exit from anaphase of mitosis and disassembled as cells enter S phase. Interacts directly with ORC2, ORC3, ORC4 and ORC5. As to expression, follow a cell-cycle regulation with a peak at the G1/S-phase. Mostly expressed in siliques, flowers, flower buds and mature leaves, and, to a lower exent, in roots, leaves and stems.

Its subcellular location is the nucleus. Component of the origin recognition complex (ORC) that binds origins of replication. DNA-binding is ATP-dependent. The specific DNA sequences that define origins of replication have not been identified yet. ORC is required to assemble the pre-replication complex necessary to initiate DNA replication. In Arabidopsis thaliana (Mouse-ear cress), this protein is Origin of replication complex subunit 6.